The following is a 348-amino-acid chain: Alternative squalene epoxidase (348 aa).

Basic and acidic residues predominate over residues 1-10 (MLVDRVENNE). Positions 1-26 (MLVDRVENNEKQQQQMASSSDAMSDS) are disordered. A compositionally biased stretch (low complexity) spans 12–26 (QQQQMASSSDAMSDS). 3 consecutive transmembrane segments (helical) span residues 55–75 (AIAW…LLLS), 105–125 (LGLV…WIFF), and 153–173 (GLLT…YLAI). The Fatty acid hydroxylase domain maps to 197 to 332 (FMCLVLQDGI…FMWFDQLGGT (136 aa)). The short motif at 211–215 (HVLEH) is the Histidine box-1 element. The Histidine box-2 signature appears at 226-230 (HKPHH). Helical transmembrane passes span 243–263 (GSLM…ANLV) and 277–297 (SYAC…DGIF). The Histidine box-3 motif lies at 308-312 (HHVHH).

This sequence belongs to the sterol desaturase family. As to quaternary structure, interacts with cytochrome b5/PHATRDRAFT_30770. It depends on Fe cation as a cofactor.

The protein localises to the endoplasmic reticulum membrane. The enzyme catalyses squalene + 2 Fe(II)-[cytochrome b5] + O2 + 2 H(+) = (S)-2,3-epoxysqualene + 2 Fe(III)-[cytochrome b5] + H2O. It functions in the pathway terpene metabolism; lanosterol biosynthesis; lanosterol from farnesyl diphosphate. The activity of this enzyme is not inhibited by terbinafine, an established inhibitor of the conventional flavoprotein squalene epoxidase. Its function is as follows. Catalyzes the stereospecific epoxidation of squalene at the terminal double bond to form (S)-2,3-epoxysqualene, the first oxygenation step in sterol biosynthesis. This is Alternative squalene epoxidase from Phaeodactylum tricornutum (strain CCAP 1055/1).